Reading from the N-terminus, the 301-residue chain is MPIIIDKDLPARKVLQEENIFVMTKERAETQDIRALKIAILNLMPTKQETEAQLLRLIGNTPLQLDVHLLHMESHLSRNVAQEHLTSFYKTFRDIENEKFDGLIITGAPVETLSFEEVDYWEELKRIMEYSKTNVTSTLHICWGAQAGLYHHYGVQKYPLKEKMFGVFEHEVREQHVKLLQGFDELFFAPHSRHTEVRESDIREVKELTLLANSEEAGVHLVIGQEGRQVFALGHSEYSCDTLKQEYERDRDKGLNIDVPKNYFKHDNPNEKPLVRWRSHGNLLFSNWLNYYVYQETPYVL.

Cys142 serves as the catalytic Acyl-thioester intermediate. The substrate site is built by Lys163 and Ser192. His235 serves as the catalytic Proton acceptor. Residue Glu237 is part of the active site. Arg249 contributes to the substrate binding site.

It belongs to the MetA family. In terms of assembly, homodimer.

It localises to the cytoplasm. The catalysed reaction is L-homoserine + acetyl-CoA = O-acetyl-L-homoserine + CoA. It participates in amino-acid biosynthesis; L-methionine biosynthesis via de novo pathway; O-acetyl-L-homoserine from L-homoserine: step 1/1. Its function is as follows. Transfers an acetyl group from acetyl-CoA to L-homoserine, forming acetyl-L-homoserine. Utilizes a ping-pong kinetic mechanism in which the acetyl group of acetyl-CoA is initially transferred to the enzyme to form an acetyl-enzyme intermediate before subsequent transfer to homoserine to form the final product, O-acetylhomoserine. Cannot use succinyl-CoA as the acyl donor. This chain is Homoserine O-acetyltransferase, found in Bacillus cereus (strain ATCC 10987 / NRS 248).